Reading from the N-terminus, the 449-residue chain is Phosphoglucosamine mutase (449 aa).

Serine 100 serves as the catalytic Phosphoserine intermediate. The Mg(2+) site is built by serine 100, aspartate 241, aspartate 243, and aspartate 245. Residue serine 100 is modified to Phosphoserine.

The protein belongs to the phosphohexose mutase family. The cofactor is Mg(2+). In terms of processing, activated by phosphorylation.

The enzyme catalyses alpha-D-glucosamine 1-phosphate = D-glucosamine 6-phosphate. In terms of biological role, catalyzes the conversion of glucosamine-6-phosphate to glucosamine-1-phosphate. This is Phosphoglucosamine mutase from Clostridium botulinum (strain 657 / Type Ba4).